A 169-amino-acid polypeptide reads, in one-letter code: Protein Flattop homolog (169 aa).

Residues 53–169 (IPRSSRSPWG…SPKLATPEPC (117 aa)) are disordered. The span at 119–130 (VQASPRNASPLQ) shows a compositional bias: polar residues.

Belongs to the Flattop family.

It localises to the cytoplasm. It is found in the cytoskeleton. The protein localises to the cilium basal body. Its subcellular location is the cell projection. The protein resides in the cilium. It localises to the apical cell membrane. Acts as a regulator of cilium basal body docking and positioning in mono- and multiciliated cells. The polypeptide is Protein Flattop homolog (Nematostella vectensis (Starlet sea anemone)).